Consider the following 218-residue polypeptide: Peptide methionine sulfoxide reductase MsrA (218 aa).

Cysteine 54 is an active-site residue.

It belongs to the MsrA Met sulfoxide reductase family.

The catalysed reaction is L-methionyl-[protein] + [thioredoxin]-disulfide + H2O = L-methionyl-(S)-S-oxide-[protein] + [thioredoxin]-dithiol. It carries out the reaction [thioredoxin]-disulfide + L-methionine + H2O = L-methionine (S)-S-oxide + [thioredoxin]-dithiol. Functionally, has an important function as a repair enzyme for proteins that have been inactivated by oxidation. Catalyzes the reversible oxidation-reduction of methionine sulfoxide in proteins to methionine. The protein is Peptide methionine sulfoxide reductase MsrA of Azorhizobium caulinodans (strain ATCC 43989 / DSM 5975 / JCM 20966 / LMG 6465 / NBRC 14845 / NCIMB 13405 / ORS 571).